Here is a 261-residue protein sequence, read N- to C-terminus: MSQEASVDGRFGVASSPTIEEAAGLLEKLLDGSSMVVVAGVCSSEYEGRGASVSTEGDKLLIVKPGGAVILHGPRGFRPLNWQPSTSHTEVATADGLLTLKFYRRTPREVLKIACGSIWYIAWVRFPEEGAFWMYMTEDDLRKAVALHPRELLGEDIRFFAEEKRTPSGKADLYGVDERGNIVIVEVKRVRADESAVRQLEGYVRDYPTQAKVRGILVAPDISDAARRLLESRGLEFRRVDLKKAYSLLKPGRGRSVLDFL.

It belongs to the NucS endonuclease family.

It is found in the cytoplasm. Its function is as follows. Cleaves both 3' and 5' ssDNA extremities of branched DNA structures. The sequence is that of Endonuclease NucS from Aeropyrum pernix (strain ATCC 700893 / DSM 11879 / JCM 9820 / NBRC 100138 / K1).